Consider the following 122-residue polypeptide: uncharacterized protein (122 aa).

Residues 97–122 (TSRNGFSNPNKDGKKNDDDNNSSSKS) are disordered.

This is an uncharacterized protein from Mycoplasma genitalium (strain ATCC 33530 / DSM 19775 / NCTC 10195 / G37) (Mycoplasmoides genitalium).